The sequence spans 265 residues: Cytochrome c oxidase subunit 3 (265 aa).

A run of 6 helical transmembrane segments spans residues 16-36 (PWPI…VMYM), 41-61 (GGAT…FVWW), 81-101 (GPRY…FALF), 162-182 (AVYA…FQGM), 200-220 (FFLA…FSIV), and 245-265 (WHFV…WGGI).

Belongs to the cytochrome c oxidase subunit 3 family. Component of the cytochrome c oxidase (complex IV, CIV), a multisubunit enzyme composed of a catalytic core of 3 subunits and several supernumerary subunits. The complex exists as a monomer or a dimer and forms supercomplexes (SCs) in the inner mitochondrial membrane with ubiquinol-cytochrome c oxidoreductase (cytochrome b-c1 complex, complex III, CIII).

Its subcellular location is the mitochondrion inner membrane. The catalysed reaction is 4 Fe(II)-[cytochrome c] + O2 + 8 H(+)(in) = 4 Fe(III)-[cytochrome c] + 2 H2O + 4 H(+)(out). Functionally, component of the cytochrome c oxidase, the last enzyme in the mitochondrial electron transport chain which drives oxidative phosphorylation. The respiratory chain contains 3 multisubunit complexes succinate dehydrogenase (complex II, CII), ubiquinol-cytochrome c oxidoreductase (cytochrome b-c1 complex, complex III, CIII) and cytochrome c oxidase (complex IV, CIV), that cooperate to transfer electrons derived from NADH and succinate to molecular oxygen, creating an electrochemical gradient over the inner membrane that drives transmembrane transport and the ATP synthase. Cytochrome c oxidase is the component of the respiratory chain that catalyzes the reduction of oxygen to water. Electrons originating from reduced cytochrome c in the intermembrane space (IMS) are transferred via the dinuclear copper A center (CU(A)) of subunit 2 and heme A of subunit 1 to the active site in subunit 1, a binuclear center (BNC) formed by heme A3 and copper B (CU(B)). The BNC reduces molecular oxygen to 2 water molecules using 4 electrons from cytochrome c in the IMS and 4 protons from the mitochondrial matrix. This Helianthus annuus (Common sunflower) protein is Cytochrome c oxidase subunit 3 (COX3).